The chain runs to 860 residues: Leucine--tRNA ligase (860 aa).

Residues 42–52 (PYPSGRLHMGH) carry the 'HIGH' region motif. The 'KMSKS' region motif lies at 619–623 (KMSKS). Lys622 serves as a coordination point for ATP.

This sequence belongs to the class-I aminoacyl-tRNA synthetase family.

It is found in the cytoplasm. The enzyme catalyses tRNA(Leu) + L-leucine + ATP = L-leucyl-tRNA(Leu) + AMP + diphosphate. The sequence is that of Leucine--tRNA ligase from Photorhabdus laumondii subsp. laumondii (strain DSM 15139 / CIP 105565 / TT01) (Photorhabdus luminescens subsp. laumondii).